Reading from the N-terminus, the 443-residue chain is Ribosomal protein uS12 methylthiotransferase RimO (443 aa).

Positions 5 to 116 (PSVAVAHLGC…IVDVIQRAEA (112 aa)) constitute an MTTase N-terminal domain. Residues Cys-14, Cys-50, Cys-79, Cys-154, Cys-158, and Cys-161 each coordinate [4Fe-4S] cluster. One can recognise a Radical SAM core domain in the interval 140-370 (TTTEGTAYVR…ALQQPISWQQ (231 aa)). The region spanning 372 to 442 (QQEVGKTVQV…AYDLQGQLVS (71 aa)) is the TRAM domain.

The protein belongs to the methylthiotransferase family. RimO subfamily. It depends on [4Fe-4S] cluster as a cofactor.

It localises to the cytoplasm. It carries out the reaction L-aspartate(89)-[ribosomal protein uS12]-hydrogen + (sulfur carrier)-SH + AH2 + 2 S-adenosyl-L-methionine = 3-methylsulfanyl-L-aspartate(89)-[ribosomal protein uS12]-hydrogen + (sulfur carrier)-H + 5'-deoxyadenosine + L-methionine + A + S-adenosyl-L-homocysteine + 2 H(+). Functionally, catalyzes the methylthiolation of an aspartic acid residue of ribosomal protein uS12. The polypeptide is Ribosomal protein uS12 methylthiotransferase RimO (Acaryochloris marina (strain MBIC 11017)).